The primary structure comprises 405 residues: Acetate kinase (405 aa).

Asn-7 contributes to the Mg(2+) binding site. An ATP-binding site is contributed by Lys-14. Substrate is bound at residue Arg-98. The active-site Proton donor/acceptor is Asp-155. ATP-binding positions include His-214 to Gly-218, Asp-289 to Arg-291, and Gly-337 to Asn-341. Residue Glu-390 coordinates Mg(2+).

It belongs to the acetokinase family. In terms of assembly, homodimer. It depends on Mg(2+) as a cofactor. The cofactor is Mn(2+).

It is found in the cytoplasm. The enzyme catalyses acetate + ATP = acetyl phosphate + ADP. Its pathway is metabolic intermediate biosynthesis; acetyl-CoA biosynthesis; acetyl-CoA from acetate: step 1/2. Catalyzes the formation of acetyl phosphate from acetate and ATP. Can also catalyze the reverse reaction. In Gloeothece citriformis (strain PCC 7424) (Cyanothece sp. (strain PCC 7424)), this protein is Acetate kinase.